Consider the following 326-residue polypeptide: Aspartate carbamoyltransferase catalytic subunit (326 aa).

2 residues coordinate carbamoyl phosphate: R60 and T61. K88 lines the L-aspartate pocket. Positions 110, 143, and 146 each coordinate carbamoyl phosphate. L-aspartate-binding residues include R183 and R239. Carbamoyl phosphate is bound by residues G280 and P281.

It belongs to the aspartate/ornithine carbamoyltransferase superfamily. ATCase family. As to quaternary structure, heterododecamer (2C3:3R2) of six catalytic PyrB chains organized as two trimers (C3), and six regulatory PyrI chains organized as three dimers (R2).

The catalysed reaction is carbamoyl phosphate + L-aspartate = N-carbamoyl-L-aspartate + phosphate + H(+). Its pathway is pyrimidine metabolism; UMP biosynthesis via de novo pathway; (S)-dihydroorotate from bicarbonate: step 2/3. In terms of biological role, catalyzes the condensation of carbamoyl phosphate and aspartate to form carbamoyl aspartate and inorganic phosphate, the committed step in the de novo pyrimidine nucleotide biosynthesis pathway. The sequence is that of Aspartate carbamoyltransferase catalytic subunit from Microcystis aeruginosa (strain NIES-843 / IAM M-2473).